Reading from the N-terminus, the 478-residue chain is Chromosomal replication initiator protein DnaA (478 aa).

The tract at residues 1–95 (MNKTLNPQEV…DVLEKEITEE (95 aa)) is domain I, interacts with DnaA modulators. Residues 96–141 (INDLVQSMEEEDFALIDHTKPVIPNFFDQNTRVNFGGGPNNHHPTT) form a domain II region. A domain III, AAA+ region region spans residues 142-358 (GVNPRFTFDN…GALLRIFALA (217 aa)). Residues glycine 186, glycine 188, lysine 189, and threonine 190 each contribute to the ATP site. The tract at residues 359 to 478 (SFNKEEINMT…YKLTQFILRR (120 aa)) is domain IV, binds dsDNA.

It belongs to the DnaA family. Oligomerizes as a right-handed, spiral filament on DNA at oriC.

It is found in the cytoplasm. In terms of biological role, plays an essential role in the initiation and regulation of chromosomal replication. ATP-DnaA binds to the origin of replication (oriC) to initiate formation of the DNA replication initiation complex once per cell cycle. Binds the DnaA box (a 9 base pair repeat at the origin) and separates the double-stranded (ds)DNA. Forms a right-handed helical filament on oriC DNA; dsDNA binds to the exterior of the filament while single-stranded (ss)DNA is stabiized in the filament's interior. The ATP-DnaA-oriC complex binds and stabilizes one strand of the AT-rich DNA unwinding element (DUE), permitting loading of DNA polymerase. After initiation quickly degrades to an ADP-DnaA complex that is not apt for DNA replication. Binds acidic phospholipids. This Tropheryma whipplei (strain TW08/27) (Whipple's bacillus) protein is Chromosomal replication initiator protein DnaA.